Here is a 214-residue protein sequence, read N- to C-terminus: Adenylate kinase (214 aa).

10–15 (GAGKGT) lines the ATP pocket. Residues 30 to 59 (STGDMLRAAVKAGTPLGLEAKKVMDAGQLV) form an NMP region. AMP-binding positions include T31, R36, 57–59 (QLV), 85–88 (GFPR), and Q92. The LID stretch occupies residues 122–159 (GRRVHPGSGRVYHIVFNQPKVEGKDDVTGEDLAIRPDD). ATP contacts are provided by residues R123 and 132-133 (VY). R156 and R167 together coordinate AMP. Residue Q200 coordinates ATP.

The protein belongs to the adenylate kinase family. As to quaternary structure, monomer.

The protein resides in the cytoplasm. The catalysed reaction is AMP + ATP = 2 ADP. Its pathway is purine metabolism; AMP biosynthesis via salvage pathway; AMP from ADP: step 1/1. Catalyzes the reversible transfer of the terminal phosphate group between ATP and AMP. Plays an important role in cellular energy homeostasis and in adenine nucleotide metabolism. The sequence is that of Adenylate kinase from Shewanella piezotolerans (strain WP3 / JCM 13877).